We begin with the raw amino-acid sequence, 438 residues long: Glutamyl-tRNA reductase (438 aa).

Substrate contacts are provided by residues 49-52, Ser-109, 114-116, and Gln-120; these read TCNR and EGQ. Cys-50 (nucleophile) is an active-site residue. Position 198–203 (198–203) interacts with NADP(+); the sequence is GAGRMS.

It belongs to the glutamyl-tRNA reductase family. In terms of assembly, homodimer.

It carries out the reaction (S)-4-amino-5-oxopentanoate + tRNA(Glu) + NADP(+) = L-glutamyl-tRNA(Glu) + NADPH + H(+). It participates in porphyrin-containing compound metabolism; protoporphyrin-IX biosynthesis; 5-aminolevulinate from L-glutamyl-tRNA(Glu): step 1/2. The protein operates within porphyrin-containing compound metabolism; chlorophyll biosynthesis. Functionally, catalyzes the NADPH-dependent reduction of glutamyl-tRNA(Glu) to glutamate 1-semialdehyde (GSA). The chain is Glutamyl-tRNA reductase from Synechococcus sp. (strain WH7803).